Here is a 562-residue protein sequence, read N- to C-terminus: MNPLFGPNLFLLQQEQQGLAGPLGDPLGGDHFAGGGDLASAPLASAGPSAYSPPGPGPAPPAAMALRNDLGSNINVLKTLNLRFRCFLAKVHELERRNRLLEKQLQQALEEGKQGRRGLARRDQAVQTGFISPIRPLGLPLSSRPAAVCPPSARVLGSPSRSPAGPLASSAACHTSSSTSTSTAFSSSTRFMPGTIWSFSHARRLGPGLEPTLVQGPGLSWVHPDGVGVQIDTITPEIRALYNVLAKVKRERDEYKRRWEEEYTVRIQLQERVTELQEEAQEADACQEELAMKVEQLKAELVVFKGLMSNNLTELDTKIQEKAMKVDMDICRRIDITAKLCDLAQQRNCEDMIQMFQKKLVPSMGGRKRERKAAVEEDTSLSESDGPRQPEGAEEESTALSINEEMQRMLSQLREYDFEDDCDSLTWEETEETLLLWEDFSGYAMAAAEAQGEQEDSLEKVIKDTESLFKTREKEYQETIDQIELELATAKNDMNRHLHEYMEMCSMKRGLDVQMETCRRLITQSGDRKSPAFTAVPLSDPPPPPSETEDSDRDVSSDSSMR.

An LMNA binding region spans residues 65 to 116; sequence ALRNDLGSNINVLKTLNLRFRCFLAKVHELERRNRLLEKQLQQALEEGKQGR. In terms of domain architecture, IF rod spans 73-529; the sequence is NINVLKTLNL…RLITQSGDRK (457 aa). The stretch at 85–117 forms a coiled coil; it reads RCFLAKVHELERRNRLLEKQLQQALEEGKQGRR. The disordered stretch occupies residues 154–187; the sequence is RVLGSPSRSPAGPLASSAACHTSSSTSTSTAFSS. Residues 168-187 are compositionally biased toward low complexity; sequence ASSAACHTSSSTSTSTAFSS. Positions 237–301 form a coiled coil; it reads EIRALYNVLA…MKVEQLKAEL (65 aa). Positions 364–401 are disordered; that stretch reads MGGRKRERKAAVEEDTSLSESDGPRQPEGAEEESTALS. The XCCR4 binding. Required for localization to the double-strand breaks (DSBs) stretch occupies residues 453–528; sequence EQEDSLEKVI…RRLITQSGDR (76 aa). Residues 458–504 are a coiled coil; that stretch reads LEKVIKDTESLFKTREKEYQETIDQIELELATAKNDMNRHLHEYMEM. Positions 523–562 are disordered; the sequence is TQSGDRKSPAFTAVPLSDPPPPPSETEDSDRDVSSDSSMR. Residues 553 to 562 show a composition bias toward basic and acidic residues; that stretch reads RDVSSDSSMR.

It belongs to the intermediate filament family. In terms of assembly, forms a heterotetramer with XRCC4. The interaction with XRCC4 is direct, involves LIG4-free XRCC4 and leads to relocalization of IFFO1 at the double-strand break (DSB) sites. Interacts with LMNA; the interaction forms an interior nucleoskeleton and the recruitment to DNA double-strand breaks.

It is found in the nucleus. The protein localises to the nucleoplasm. It localises to the nucleus inner membrane. The protein resides in the nucleus matrix. Functionally, nuclear matrix protein involved in the immobilization of broken DNA ends and the suppression of chromosome translocation during DNA double-strand breaks (DSBs). Interacts with the nuclear lamina component LMNA, resulting in the formation of a nucleoskeleton that will relocalize to the DSB sites in a XRCC4-dependent manner and promote the immobilization of the broken ends, thereby preventing chromosome translocation. Acts as a scaffold that allows the DNA repair protein XRCC4 and LMNA to assemble into a complex at the DSB sites. This is Non-homologous end joining factor IFFO1 from Mus musculus (Mouse).